The following is a 463-amino-acid chain: Glutamate--tRNA ligase 2 (463 aa).

A 'HIGH' region motif is present at residues 11–21; sequence PSPTGYLHIGG. Residues 240 to 244 carry the 'KMSKS' region motif; the sequence is KLSKR. Lysine 243 contributes to the ATP binding site.

The protein belongs to the class-I aminoacyl-tRNA synthetase family. Glutamate--tRNA ligase type 1 subfamily. In terms of assembly, monomer.

The protein localises to the cytoplasm. The catalysed reaction is tRNA(Glu) + L-glutamate + ATP = L-glutamyl-tRNA(Glu) + AMP + diphosphate. Catalyzes the attachment of glutamate to tRNA(Glu) in a two-step reaction: glutamate is first activated by ATP to form Glu-AMP and then transferred to the acceptor end of tRNA(Glu). In Campylobacter jejuni subsp. jejuni serotype O:6 (strain 81116 / NCTC 11828), this protein is Glutamate--tRNA ligase 2.